Consider the following 382-residue polypeptide: MYIAGVMSGTSLDGIDVALVHIEGSGVDSKIELIHFTTVPFCNDMKNEIQQALSIETSNVQLICSLNFKLGLCFANAVKEVCKEANFPLRQLDLIGSHGQTIYHQPKQEGNIISSTLQIGEPAVIAYETNTTVISNFRTMDMAAGGQGAPLVPYSEIILYRHQTKNRLLQNIGGIGNVTVVPSKRSNESVIAFDTGPGNMIIDEVCQRLFQLSYDQNGKIAKQGVVVDEILTYCMNHPFLNVKPPKSTGREQFGEAFVTELLNRFEKHSRENILATVTMFTASSIVHHYQEFIFPYYEIDEVILGGGGSYNRTLVEMIRFGLKEEKCKIFTQEDLGYSSAAKEAIAFAILANETYHRNPSNVPSATGAKQSVVLGNITFPPI.

9-16 (GTSLDGID) contacts ATP.

The protein belongs to the anhydro-N-acetylmuramic acid kinase family.

The enzyme catalyses 1,6-anhydro-N-acetyl-beta-muramate + ATP + H2O = N-acetyl-D-muramate 6-phosphate + ADP + H(+). The protein operates within amino-sugar metabolism; 1,6-anhydro-N-acetylmuramate degradation. It participates in cell wall biogenesis; peptidoglycan recycling. Its function is as follows. Catalyzes the specific phosphorylation of 1,6-anhydro-N-acetylmuramic acid (anhMurNAc) with the simultaneous cleavage of the 1,6-anhydro ring, generating MurNAc-6-P. Is required for the utilization of anhMurNAc either imported from the medium or derived from its own cell wall murein, and thus plays a role in cell wall recycling. The protein is Anhydro-N-acetylmuramic acid kinase of Bacillus cereus (strain G9842).